A 542-amino-acid chain; its full sequence is MDLGWDRSRGPRRSTSSVRVRELSWQGLHNPCPQSKGPGSQRDRLGEQLVEEYLSPARLQALARVDDLRLVRTLEMCVDTREGSLGNFGVHLPNLDQLKLNGSHLGSLRDLGTSLGHLQVLWLARCGLADLDGIASLPALKELYASYNNISDLSPLCLLEQLEVLDLEGNSVEDLGQVRYLQLCPRLAMLTLEGNLVCLQPAPGPTNKVPRGYNYRAEVRKLIPQLQVLDEVPAAHTGPPAPPRLSQDWLAVKEAIKKGNGLPPLDCPRGAPIRRLDPELSLPETQSRASRPWPFSLLVRGGPLPEGLLSEDLAPEDNTSSLTHGAGQVLCGNPTKGLRERRHQCQAREPPEQLPQHRPGDPAASTSTPEPDPADSSDFLALAGLRAWREHGVRPLPYRHPESQQEGAVAPWGPRRVPEEQVHQAEPKTPSSPPSLASEPSGTSSQHLVPSPPKHPRPRDSGSSSPRWSTDLQSRGRRLRVLGSWGPGLGDGVAAVPVLRALEVASRLSPRAQGCPGPKPAPDAAARPPRAAELSHPSPVPT.

LRR repeat units lie at residues 94–115 (NLDQ…GTSL), 117–138 (HLQV…ASLP), 139–160 (ALKE…CLLE), 161–182 (QLEV…RYLQ), and 186–206 (RLAM…PGPT). In terms of domain architecture, LRRCT spans 207-250 (NKVPRGYNYRAEVRKLIPQLQVLDEVPAAHTGPPAPPRLSQDWL). Disordered regions lie at residues 308–377 (LLSE…ADSS), 396–475 (LPYR…LQSR), and 507–542 (RLSP…PVPT). The span at 416 to 426 (RVPEEQVHQAE) shows a compositional bias: basic and acidic residues. Low complexity predominate over residues 522-532 (PDAAARPPRAA).

Belongs to the LRRC56 family. As to quaternary structure, interacts with IFT88.

It localises to the cell projection. The protein resides in the cilium. Required for the assembly of dynein arms. This is Leucine-rich repeat-containing protein 56 (LRRC56) from Homo sapiens (Human).